We begin with the raw amino-acid sequence, 290 residues long: O-methyltransferase agiB (290 aa).

D155 contributes to the S-adenosyl-L-methionine binding site. The Proton acceptor role is filled by H194.

Belongs to the class I-like SAM-binding methyltransferase superfamily. Cation-independent O-methyltransferase family.

The protein operates within secondary metabolite biosynthesis. O-methyltransferase; part of the gene cluster that mediates the biosynthesis of the aspergillicins A and F, 2 cryptic cyclic hexa-depsipeptides. The hexamodular NRPS agiA catalyzes the condensation of the six amino acid residues including N-Me-L-O-Me-tyrosine, L-proline 1, L-proline 2, D-isoleucine, O-acetyl-threonine, and L-isoleucine. The starting condensation domain (C1) of agiA probably loads acetyl-CoA which is condensed on the N-terminus of threonine by the first module to yield O-acetyl-threonine. The second module then loads L-isoleucine. The epimerase (E) domain on module 2 is probably involved in the formation of the D-isoleucine moiety. Modules 3 and 4 further load 2 successive L-prolines. Module 5 is then involved in the condensation of O-Me-L-tyrosine produced by the O-methyltransferase agiB and the N-methyl transferase (NMeT) domain on module 5 probably catalyzes the N-methylation to yield the N-Me-L-O-Me-tyrosine moiety. The A domain of module 5 loads preferentially O-Me-L-tyrosine, but it can also accept L-phenylalanine, which leads to the production of aspergillicin G. Module 6 then loads the last residue, L-isoleucine. The C-terminal thiolesterase (TE) domain probably cyclizes the peptide using the hydroxy group from threonine to form the cyclic depsipeptide. The protein is O-methyltransferase agiB of Aspergillus flavus (strain ATCC 200026 / FGSC A1120 / IAM 13836 / NRRL 3357 / JCM 12722 / SRRC 167).